Here is a 424-residue protein sequence, read N- to C-terminus: MLDIRLIREQPDLVKASLGRTGVDPAQVDAVLAYDEQRRALLREVEQLKALRNAVSKEIGKMSDAAARDAKIAEMRAVGDRIAELDRELAAVEEQQYAALMELRNLPHPSVPDGPDETYNVVIAQEGEPRTFDFTPKPHWELGEALDIIDFERGVKLSGSRFYVLKGPGARLQRALIQWMLDLHGKQGYDEVYTPFVVKEQCMWGARQLPKFRDNLYRDVEDDLWLVPTAEVPVTNLHRDEILDADQLPLRYCAYTPCFRREKMSAGRDVRGIKRGHQFDKVEMYMFVRPETSYDELEKLRADAEETCRLLGLPFRTKELCTGDLGFAATRTYDIEVWAPGQGEWLEVSSCSNVEAFQARAANIRYRPEPGARPEYVHTLNGSGLGLPRTLIAILENYQQADGSVVIPEVLRPYMGGIEVIRRT.

Position 229-231 (threonine 229–glutamate 231) interacts with L-serine. Arginine 260–glutamate 262 contacts ATP. An L-serine-binding site is contributed by glutamate 283. Glutamate 347–serine 350 is an ATP binding site. An L-serine-binding site is contributed by serine 383.

This sequence belongs to the class-II aminoacyl-tRNA synthetase family. Type-1 seryl-tRNA synthetase subfamily. As to quaternary structure, homodimer. The tRNA molecule binds across the dimer.

The protein resides in the cytoplasm. The catalysed reaction is tRNA(Ser) + L-serine + ATP = L-seryl-tRNA(Ser) + AMP + diphosphate + H(+). It carries out the reaction tRNA(Sec) + L-serine + ATP = L-seryl-tRNA(Sec) + AMP + diphosphate + H(+). Its pathway is aminoacyl-tRNA biosynthesis; selenocysteinyl-tRNA(Sec) biosynthesis; L-seryl-tRNA(Sec) from L-serine and tRNA(Sec): step 1/1. In terms of biological role, catalyzes the attachment of serine to tRNA(Ser). Is also able to aminoacylate tRNA(Sec) with serine, to form the misacylated tRNA L-seryl-tRNA(Sec), which will be further converted into selenocysteinyl-tRNA(Sec). The sequence is that of Serine--tRNA ligase from Roseiflexus sp. (strain RS-1).